Here is a 384-residue protein sequence, read N- to C-terminus: ATP phosphoribosyltransferase regulatory subunit (384 aa).

This sequence belongs to the class-II aminoacyl-tRNA synthetase family. HisZ subfamily. As to quaternary structure, heteromultimer composed of HisG and HisZ subunits.

It is found in the cytoplasm. It participates in amino-acid biosynthesis; L-histidine biosynthesis; L-histidine from 5-phospho-alpha-D-ribose 1-diphosphate: step 1/9. Its function is as follows. Required for the first step of histidine biosynthesis. May allow the feedback regulation of ATP phosphoribosyltransferase activity by histidine. This is ATP phosphoribosyltransferase regulatory subunit from Rhodospirillum rubrum (strain ATCC 11170 / ATH 1.1.1 / DSM 467 / LMG 4362 / NCIMB 8255 / S1).